Here is a 384-residue protein sequence, read N- to C-terminus: MQTIDVLIVGGGVIGTSCAYELSQYKLKVALLEKNAFLGCETSQANSGVIHSGIDPNPNKLTAKYNILGRKIWIEDWFKKLIFPRKKIATLIVAFNNEEKLQLNLLKERGIKNSIPVENIQILDQQQTLLQEPFINPNVVASLKVEGSWLIDPLIATKCLALASLQNNVAIYSNKKVTKIEIDSDDDFLVFINNETTPQFKTKKLIDAAGHYADWLAETTQVDNFKQTTRKGQYLVLKNQNNLKINTIIFMVPTIHGKGVVVAEMLDGNILVGPNAVEGIEKNKTRSIDLDSINQIKTIGKKMVPSLQFENSIYSFAGSRAIDIETNDFVIRTAKSNPNFIILGGMKSPGLTSSPAIAKRAVELLNLKLKKKINWNPNYNLSWI.

A signal peptide spans 1 to 17 (MQTIDVLIVGGGVIGTS). I14 is a binding site for FAD. C18 carries N-palmitoyl cysteine lipidation. Residue C18 is the site of S-diacylglycerol cysteine attachment. FAD contacts are provided by residues E33, 42–43 (TS), and 47–49 (SGV). The sn-glycerol 3-phosphate site is built by S47 and H51. H51 serves as the catalytic Proton acceptor. An FAD-binding site is contributed by V177. K258 and R320 together coordinate sn-glycerol 3-phosphate. An FAD-binding site is contributed by 346-347 (MK). Sn-glycerol 3-phosphate is bound at residue S348. T352 contributes to the FAD binding site.

Monomer. Requires FAD as cofactor.

It is found in the cytoplasm. Its subcellular location is the cell membrane. It catalyses the reaction sn-glycerol 3-phosphate + O2 = dihydroxyacetone phosphate + H2O2. It functions in the pathway polyol metabolism; glycerol degradation via glycerol kinase pathway; glycerone phosphate from sn-glycerol 3-phosphate (aerobic route): step 1/1. Catalyzes the oxidation of glycerol 3-phosphate to dihydroxyacetone phosphate (DHAP), with a reduction of O2 to H2O2. The formation of hydrogen peroxide by this enzyme is crucial for cytotoxic effects on host cells. Does not show any dehydrogenase activity with NAD(+). The polypeptide is Glycerol 3-phosphate oxidase (Mycoplasma genitalium (strain ATCC 33530 / DSM 19775 / NCTC 10195 / G37) (Mycoplasmoides genitalium)).